A 360-amino-acid chain; its full sequence is Photosystem II protein D1 1 (360 aa).

The next 3 helical transmembrane spans lie at 29 to 46 (YVGW…TATT), 118 to 133 (HFLI…EWEL), and 142 to 156 (WICV…AATA). A chlorophyll a-binding site is contributed by H118. Y126 contacts pheophytin a. 2 residues coordinate [CaMn4O5] cluster: D170 and E189. The helical transmembrane segment at 197-218 (FHMLGVAGVFGGSLFSAMHGSL) threads the bilayer. H198 provides a ligand contact to chlorophyll a. A quinone contacts are provided by residues H215 and 264 to 265 (SF). H215 is a Fe cation binding site. Fe cation is bound at residue H272. Residues 274-288 (FLGAWPVVGIWFTAL) traverse the membrane as a helical segment. The [CaMn4O5] cluster site is built by H332, E333, D342, and A344. Residues 345–360 (AGEQAPVALQAPAING) constitute a propeptide that is removed on maturation.

The protein belongs to the reaction center PufL/M/PsbA/D family. PSII is composed of 1 copy each of membrane proteins PsbA, PsbB, PsbC, PsbD, PsbE, PsbF, PsbH, PsbI, PsbJ, PsbK, PsbL, PsbM, PsbT, PsbX, PsbY, PsbZ, Psb30/Ycf12, peripheral proteins PsbO, CyanoQ (PsbQ), PsbU, PsbV and a large number of cofactors. It forms dimeric complexes. It depends on The D1/D2 heterodimer binds P680, chlorophylls that are the primary electron donor of PSII, and subsequent electron acceptors. It shares a non-heme iron and each subunit binds pheophytin, quinone, additional chlorophylls, carotenoids and lipids. D1 provides most of the ligands for the Mn4-Ca-O5 cluster of the oxygen-evolving complex (OEC). There is also a Cl(-1) ion associated with D1 and D2, which is required for oxygen evolution. The PSII complex binds additional chlorophylls, carotenoids and specific lipids. as a cofactor. In terms of processing, tyr-161 forms a radical intermediate that is referred to as redox-active TyrZ, YZ or Y-Z. C-terminally processed by CtpA; processing is essential to allow assembly of the oxygen-evolving complex and thus photosynthetic growth.

Its subcellular location is the cellular thylakoid membrane. The catalysed reaction is 2 a plastoquinone + 4 hnu + 2 H2O = 2 a plastoquinol + O2. Photosystem II (PSII) is a light-driven water:plastoquinone oxidoreductase that uses light energy to abstract electrons from H(2)O, generating O(2) and a proton gradient subsequently used for ATP formation. It consists of a core antenna complex that captures photons, and an electron transfer chain that converts photonic excitation into a charge separation. The D1/D2 (PsbA/PsbD) reaction center heterodimer binds P680, the primary electron donor of PSII as well as several subsequent electron acceptors. The sequence is that of Photosystem II protein D1 1 from Picosynechococcus sp. (strain ATCC 27264 / PCC 7002 / PR-6) (Agmenellum quadruplicatum).